We begin with the raw amino-acid sequence, 283 residues long: Probable protein phosphatase 2C 17 (283 aa).

One can recognise a PPM-type phosphatase domain in the interval 32-282; sequence KYGFSLIKGK…DDISCIVVRF (251 aa). Mn(2+) is bound by residues aspartate 69, glycine 70, aspartate 234, and aspartate 273.

The protein belongs to the PP2C family. Requires Mg(2+) as cofactor. The cofactor is Mn(2+).

The enzyme catalyses O-phospho-L-seryl-[protein] + H2O = L-seryl-[protein] + phosphate. It carries out the reaction O-phospho-L-threonyl-[protein] + H2O = L-threonyl-[protein] + phosphate. This is Probable protein phosphatase 2C 17 from Arabidopsis thaliana (Mouse-ear cress).